Consider the following 70-residue polypeptide: Large ribosomal subunit protein bL28 (70 aa).

Belongs to the bacterial ribosomal protein bL28 family.

This Maridesulfovibrio salexigens (strain ATCC 14822 / DSM 2638 / NCIMB 8403 / VKM B-1763) (Desulfovibrio salexigens) protein is Large ribosomal subunit protein bL28.